The following is a 106-amino-acid chain: Protein translocase subunit SecE (106 aa).

2 helical membrane-spanning segments follow: residues leucine 20–isoleucine 40 and isoleucine 75–valine 95.

It belongs to the SecE/SEC61-gamma family. Component of the Sec protein translocase complex. Heterotrimer consisting of SecY, SecE and SecG subunits. The heterotrimers can form oligomers, although 1 heterotrimer is thought to be able to translocate proteins. Interacts with the ribosome. Interacts with SecDF, and other proteins may be involved. Interacts with SecA.

The protein resides in the cell inner membrane. In terms of biological role, essential subunit of the Sec protein translocation channel SecYEG. Clamps together the 2 halves of SecY. May contact the channel plug during translocation. This chain is Protein translocase subunit SecE, found in Haemophilus influenzae (strain ATCC 51907 / DSM 11121 / KW20 / Rd).